A 331-amino-acid chain; its full sequence is Cytoskeleton protein RodZ (331 aa).

The Cytoplasmic segment spans residues 1–111; it reads MNTEATQDHQ…LGKRRKKRDG (111 aa). The region spanning 19-71 is the HTH cro/C1-type domain; that stretch reads LRHAREQLGLSQQAVAERLCLKVSTVRDIEDDKAPADLASTFLRGYIRSYARL. Residues 30–49 constitute a DNA-binding region (H-T-H motif); that stretch reads QQAVAERLCLKVSTVRDIED. The chain crosses the membrane as a helical; Signal-anchor for type II membrane protein span at residues 112–132; the sequence is WLMSFTWLVLFVVIGLSGAWW. The Periplasmic portion of the chain corresponds to 133–331; the sequence is WQDHKAQQEE…TLNAESSPAQ (199 aa). Over residues 146 to 166 the composition is skewed to polar residues; sequence MADQSSAELNGGDANSQNVPL. A disordered region spans residues 146 to 238; sequence MADQSSAELN…ASPLPTDQAN (93 aa). Low complexity-rich tracts occupy residues 167-202 and 216-234; these read DTSAPAAPTADSAANSAPTDTASAPTTSAPAQTPAD and TAGTTPAAPATTPASPLPT.

This sequence belongs to the RodZ family.

The protein resides in the cell inner membrane. Cytoskeletal protein that is involved in cell-shape control through regulation of the length of the long axis. In Klebsiella pneumoniae subsp. pneumoniae (strain ATCC 700721 / MGH 78578), this protein is Cytoskeleton protein RodZ.